The chain runs to 464 residues: IAA-amino acid hydrolase ILR1-like 6 (464 aa).

The first 24 residues, 1 to 24 (MDNLRKLNLLSVSLTIIFVSLTIA), serve as a signal peptide directing secretion. Mn(2+)-binding residues include C175, H177, E211, H235, and H433.

This sequence belongs to the peptidase M20 family.

It carries out the reaction a jasmonyl-L-amino acid + H2O = a jasmonate + an L-alpha-amino acid. Hydrolyzes certain amino acid conjugates of the plant growth regulator indole-3-acetic acid (IAA). Also hydrolyzes amino acid conjugates of jasmonic acid and 12-hydroxy jasmonic acid. The protein is IAA-amino acid hydrolase ILR1-like 6 of Arabidopsis thaliana (Mouse-ear cress).